The primary structure comprises 618 residues: Protein polyglycylase TTLL10 (618 aa).

The disordered stretch occupies residues M1–S76. The segment covering A57 to K74 has biased composition (low complexity). One can recognise a TTL domain in the interval P82–K479. ATP-binding positions include K240, Q246 to G247, Q289 to I292, K302 to D304, and T345 to N346. Q246 contributes to the a protein binding site. The Mg(2+) site is built by D425, E438, and N440. The interval L503–L618 is disordered. A compositionally biased stretch (pro residues) spans P539–D557. Basic and acidic residues predominate over residues A585–N594.

The cofactor is Mg(2+).

The protein resides in the cytoplasm. The protein localises to the cytoskeleton. Its subcellular location is the cell projection. It is found in the cilium. It localises to the cilium axoneme. The catalysed reaction is (glycyl)(n)-glycyl-L-glutamyl-[protein] + glycine + ATP = (glycyl)(n+1)-glycyl-L-glutamyl-[protein] + ADP + phosphate + H(+). Functionally, polyglycylase which modifies both tubulin and non-tubulin proteins, generating polyglycine side chains of variable lengths on the gamma-carboxyl groups of specific glutamate residues of target proteins. Involved in the elongation step rather than the initiation step of the polyglycylation reaction. Polyglycylates alpha-tubulin and beta-tubulin. Polyglycylates non-tubulin proteins such as nucleosome assembly protein NAP1. This chain is Protein polyglycylase TTLL10 (TTLL10), found in Macaca fascicularis (Crab-eating macaque).